Consider the following 158-residue polypeptide: SsrA-binding protein (158 aa).

A disordered region spans residues 132–158 (KKTHDKRETEKKRDWNREKARLMRDKG). A compositionally biased stretch (basic and acidic residues) spans 136–158 (DKRETEKKRDWNREKARLMRDKG).

The protein belongs to the SmpB family.

It is found in the cytoplasm. Functionally, required for rescue of stalled ribosomes mediated by trans-translation. Binds to transfer-messenger RNA (tmRNA), required for stable association of tmRNA with ribosomes. tmRNA and SmpB together mimic tRNA shape, replacing the anticodon stem-loop with SmpB. tmRNA is encoded by the ssrA gene; the 2 termini fold to resemble tRNA(Ala) and it encodes a 'tag peptide', a short internal open reading frame. During trans-translation Ala-aminoacylated tmRNA acts like a tRNA, entering the A-site of stalled ribosomes, displacing the stalled mRNA. The ribosome then switches to translate the ORF on the tmRNA; the nascent peptide is terminated with the 'tag peptide' encoded by the tmRNA and targeted for degradation. The ribosome is freed to recommence translation, which seems to be the essential function of trans-translation. This Brucella anthropi (strain ATCC 49188 / DSM 6882 / CCUG 24695 / JCM 21032 / LMG 3331 / NBRC 15819 / NCTC 12168 / Alc 37) (Ochrobactrum anthropi) protein is SsrA-binding protein.